A 106-amino-acid polypeptide reads, in one-letter code: Large ribosomal subunit protein uL24 (106 aa).

This sequence belongs to the universal ribosomal protein uL24 family. As to quaternary structure, part of the 50S ribosomal subunit.

Its function is as follows. One of two assembly initiator proteins, it binds directly to the 5'-end of the 23S rRNA, where it nucleates assembly of the 50S subunit. One of the proteins that surrounds the polypeptide exit tunnel on the outside of the subunit. This chain is Large ribosomal subunit protein uL24, found in Alkalilimnicola ehrlichii (strain ATCC BAA-1101 / DSM 17681 / MLHE-1).